Consider the following 256-residue polypeptide: tRNA (guanine-N(7)-)-methyltransferase (256 aa).

A disordered region spans residues 17 to 45; that stretch reads TCETVPGLPQKKHYRQRAHSNPHSDHDIE. Basic residues predominate over residues 26–36; sequence QKKHYRQRAHS. Residues Gly74, 97-98, 132-133, and Leu152 contribute to the S-adenosyl-L-methionine site; these read EI and NA. Asp155 is an active-site residue. Residue 230–232 coordinates S-adenosyl-L-methionine; the sequence is TEE.

Belongs to the class I-like SAM-binding methyltransferase superfamily. TrmB family.

Its subcellular location is the nucleus. It catalyses the reaction guanosine(46) in tRNA + S-adenosyl-L-methionine = N(7)-methylguanosine(46) in tRNA + S-adenosyl-L-homocysteine. It functions in the pathway tRNA modification; N(7)-methylguanine-tRNA biosynthesis. In terms of biological role, catalyzes the formation of N(7)-methylguanine at position 46 (m7G46) in tRNA. The chain is tRNA (guanine-N(7)-)-methyltransferase from Caenorhabditis elegans.